A 171-amino-acid chain; its full sequence is Lipoprotein signal peptidase (171 aa).

3 helical membrane passes run Trp-12–Ala-32, Trp-67–Leu-87, and Ser-93–Val-113. Catalysis depends on residues Asp-123 and Asp-141. The chain crosses the membrane as a helical span at residues Phe-137–Leu-157.

The protein belongs to the peptidase A8 family.

It is found in the cell inner membrane. The catalysed reaction is Release of signal peptides from bacterial membrane prolipoproteins. Hydrolyzes -Xaa-Yaa-Zaa-|-(S,diacylglyceryl)Cys-, in which Xaa is hydrophobic (preferably Leu), and Yaa (Ala or Ser) and Zaa (Gly or Ala) have small, neutral side chains.. Its pathway is protein modification; lipoprotein biosynthesis (signal peptide cleavage). In terms of biological role, this protein specifically catalyzes the removal of signal peptides from prolipoproteins. The chain is Lipoprotein signal peptidase from Shewanella baltica (strain OS223).